Here is a 940-residue protein sequence, read N- to C-terminus: DNA gyrase subunit A (940 aa).

Positions Met-1–Leu-22 are disordered. Residues Leu-48–Leu-538 form the Topo IIA-type catalytic domain. Residue Tyr-136 is the O-(5'-phospho-DNA)-tyrosine intermediate of the active site. The GyrA-box motif lies at Gln-565–Gly-571. The span at Glu-914–Asp-924 shows a compositional bias: acidic residues. The disordered stretch occupies residues Glu-914–Asp-940.

This sequence belongs to the type II topoisomerase GyrA/ParC subunit family. In terms of assembly, heterotetramer, composed of two GyrA and two GyrB chains. In the heterotetramer, GyrA contains the active site tyrosine that forms a transient covalent intermediate with DNA, while GyrB binds cofactors and catalyzes ATP hydrolysis.

It is found in the cytoplasm. The catalysed reaction is ATP-dependent breakage, passage and rejoining of double-stranded DNA.. A type II topoisomerase that negatively supercoils closed circular double-stranded (ds) DNA in an ATP-dependent manner to modulate DNA topology and maintain chromosomes in an underwound state. Negative supercoiling favors strand separation, and DNA replication, transcription, recombination and repair, all of which involve strand separation. Also able to catalyze the interconversion of other topological isomers of dsDNA rings, including catenanes and knotted rings. Type II topoisomerases break and join 2 DNA strands simultaneously in an ATP-dependent manner. In Granulibacter bethesdensis (strain ATCC BAA-1260 / CGDNIH1), this protein is DNA gyrase subunit A.